Consider the following 389-residue polypeptide: ATP phosphoribosyltransferase regulatory subunit (389 aa).

The protein belongs to the class-II aminoacyl-tRNA synthetase family. HisZ subfamily. Heteromultimer composed of HisG and HisZ subunits.

The protein localises to the cytoplasm. The protein operates within amino-acid biosynthesis; L-histidine biosynthesis; L-histidine from 5-phospho-alpha-D-ribose 1-diphosphate: step 1/9. Its function is as follows. Required for the first step of histidine biosynthesis. May allow the feedback regulation of ATP phosphoribosyltransferase activity by histidine. The protein is ATP phosphoribosyltransferase regulatory subunit of Hydrogenovibrio crunogenus (strain DSM 25203 / XCL-2) (Thiomicrospira crunogena).